The primary structure comprises 738 residues: Interleukin-12 receptor subunit beta-1 (738 aa).

A signal peptide spans 1–19; the sequence is MDMMGLAGTSKHITFLLLC. Topologically, residues 20–565 are extracellular; the sequence is QLGASGPGDG…QRFSFEVQIS (546 aa). 5 Fibronectin type-III domains span residues 47–152, 152–258, 259–359, 360–465, and 469–565; these read GPRN…TPPL, LGHI…PEVL, PQAK…LPAQ, ELTE…GNAS, and TPRH…VQIS. The N-linked (GlcNAc...) asparagine glycan is linked to Asn-50. Residues Cys-53 and Cys-63 are joined by a disulfide bond. N-linked (GlcNAc...) asparagine glycosylation is found at Asn-73, Asn-86, Asn-130, Asn-144, Asn-169, and Asn-188. The WSXWS motif signature appears at 244-248; it reads WSDWS. N-linked (GlcNAc...) asparagine glycans are attached at residues Asn-330, Asn-368, Asn-374, Asn-401, Asn-463, and Asn-477. The helical transmembrane segment at 566–591 threads the bilayer; sequence RLSIIFASLGSFASVLLVGSLGYIGL. The Cytoplasmic segment spans residues 592 to 738; that stretch reads NRAAWHLCPP…PGPPTLGQEA (147 aa). A Box 1 motif motif is present at residues 598-606; the sequence is LCPPLPTPC.

This sequence belongs to the type I cytokine receptor family. Type 2 subfamily. In terms of assembly, dimer or oligomer; disulfide-linked. Interacts with IL12RB2 to form the high affinity IL12 receptor. Heterodimer with IL23R; in presence of IL23. The heterodimer forms the IL23 receptor.

The protein localises to the membrane. Its function is as follows. Functions as an interleukin receptor which binds interleukin-12 with low affinity and is involved in IL12 transduction. Associated with IL12RB2 it forms a functional, high affinity receptor for IL12. Also associates with IL23R to form the interleukin-23 receptor which functions in IL23 signal transduction probably through activation of the Jak-Stat signaling cascade. The chain is Interleukin-12 receptor subunit beta-1 (Il12rb1) from Mus musculus (Mouse).